A 111-amino-acid chain; its full sequence is Dynein light chain Tctex-type (111 aa).

The protein belongs to the dynein light chain Tctex-type family.

The protein resides in the cytoplasm. It localises to the cytoskeleton. Its function is as follows. Acts as a non-catalytic accessory component of a dynein complex. The sequence is that of Dynein light chain Tctex-type (dlcA) from Dictyostelium discoideum (Social amoeba).